The primary structure comprises 176 residues: Inner membrane-spanning protein YciB (176 aa).

5 helical membrane passes run 23–43, 50–70, 74–94, 119–139, and 150–170; these read MIAATAVALVAGVVQAAFLYW, TMQWVGLVLIVVFGGATIVLG, FIMWKPSVLFWLGALFLWGSH, LTYMWVGFLIFMGIANWFVFT, and MFGSTALMLVFFIIQGIYLST.

The protein belongs to the YciB family.

It is found in the cell inner membrane. In terms of biological role, plays a role in cell envelope biogenesis, maintenance of cell envelope integrity and membrane homeostasis. The polypeptide is Inner membrane-spanning protein YciB (Neisseria meningitidis serogroup A / serotype 4A (strain DSM 15465 / Z2491)).